Reading from the N-terminus, the 445-residue chain is 3-phosphoshikimate 1-carboxyvinyltransferase (445 aa).

Positions 28, 29, and 33 each coordinate 3-phosphoshikimate. Lys-28 is a binding site for phosphoenolpyruvate. Phosphoenolpyruvate is bound by residues Gly-101 and Arg-129. The 3-phosphoshikimate site is built by Ser-175, Gln-177, Asp-328, and Lys-355. Gln-177 lines the phosphoenolpyruvate pocket. The Proton acceptor role is filled by Asp-328. Phosphoenolpyruvate is bound by residues Arg-359 and Arg-402.

This sequence belongs to the EPSP synthase family. Monomer.

The protein resides in the cytoplasm. The catalysed reaction is 3-phosphoshikimate + phosphoenolpyruvate = 5-O-(1-carboxyvinyl)-3-phosphoshikimate + phosphate. Its pathway is metabolic intermediate biosynthesis; chorismate biosynthesis; chorismate from D-erythrose 4-phosphate and phosphoenolpyruvate: step 6/7. Its function is as follows. Catalyzes the transfer of the enolpyruvyl moiety of phosphoenolpyruvate (PEP) to the 5-hydroxyl of shikimate-3-phosphate (S3P) to produce enolpyruvyl shikimate-3-phosphate and inorganic phosphate. The chain is 3-phosphoshikimate 1-carboxyvinyltransferase from Rhodopseudomonas palustris (strain HaA2).